Consider the following 168-residue polypeptide: NADH dehydrogenase [ubiquinone] 1 alpha subcomplex assembly factor 2 (168 aa).

The disordered stretch occupies residues 112-168 (GKETSEELLPSPTATQVKGHASAPYFGREEPSVAPTSTGKTFQPGSWTPEDGKRQSQ). Position 133 is a phosphoserine (S133). Polar residues predominate over residues 145–157 (APTSTGKTFQPGS).

It belongs to the complex I NDUFA12 subunit family. Interacts with ARMC9.

It localises to the mitochondrion. Acts as a molecular chaperone for mitochondrial complex I assembly. Complex I functions in the transfer of electrons from NADH to the respiratory chain. The immediate electron acceptor for the enzyme is believed to be ubiquinone. Is involved in the initial steps of cilia formation, including removal of CP110 from the mother centrioles, docking of membrane vesicles to the mother centrioles, and establishment of the transition zone. The polypeptide is NADH dehydrogenase [ubiquinone] 1 alpha subcomplex assembly factor 2 (Ndufaf2) (Mus musculus (Mouse)).